A 449-amino-acid polypeptide reads, in one-letter code: Bifunctional protein GlmU (449 aa).

Positions 1 to 226 (MNNIHAIILA…KFEVLGVNDK (226 aa)) are pyrophosphorylase. UDP-N-acetyl-alpha-D-glucosamine is bound by residues 9 to 12 (LAAG), lysine 23, glutamine 73, 78 to 79 (GT), 100 to 102 (YGD), glycine 137, glutamate 151, asparagine 166, and asparagine 224. Aspartate 102 lines the Mg(2+) pocket. Asparagine 224 lines the Mg(2+) pocket. The tract at residues 227 to 247 (VQLAELERLFQKDQAIQFMKQ) is linker. The segment at 248–449 (GLGLKDPTRF…QKNLKYRSKK (202 aa)) is N-acetyltransferase. The UDP-N-acetyl-alpha-D-glucosamine site is built by arginine 330 and lysine 348. Residue histidine 360 is the Proton acceptor of the active site. Residues tyrosine 363 and asparagine 374 each contribute to the UDP-N-acetyl-alpha-D-glucosamine site. Acetyl-CoA-binding positions include alanine 377, 383–384 (NY), serine 402, alanine 420, and arginine 437.

It in the N-terminal section; belongs to the N-acetylglucosamine-1-phosphate uridyltransferase family. This sequence in the C-terminal section; belongs to the transferase hexapeptide repeat family. As to quaternary structure, homotrimer. Mg(2+) is required as a cofactor.

Its subcellular location is the cytoplasm. It carries out the reaction alpha-D-glucosamine 1-phosphate + acetyl-CoA = N-acetyl-alpha-D-glucosamine 1-phosphate + CoA + H(+). The enzyme catalyses N-acetyl-alpha-D-glucosamine 1-phosphate + UTP + H(+) = UDP-N-acetyl-alpha-D-glucosamine + diphosphate. It functions in the pathway nucleotide-sugar biosynthesis; UDP-N-acetyl-alpha-D-glucosamine biosynthesis; N-acetyl-alpha-D-glucosamine 1-phosphate from alpha-D-glucosamine 6-phosphate (route II): step 2/2. The protein operates within nucleotide-sugar biosynthesis; UDP-N-acetyl-alpha-D-glucosamine biosynthesis; UDP-N-acetyl-alpha-D-glucosamine from N-acetyl-alpha-D-glucosamine 1-phosphate: step 1/1. Its pathway is bacterial outer membrane biogenesis; LPS lipid A biosynthesis. Functionally, catalyzes the last two sequential reactions in the de novo biosynthetic pathway for UDP-N-acetylglucosamine (UDP-GlcNAc). The C-terminal domain catalyzes the transfer of acetyl group from acetyl coenzyme A to glucosamine-1-phosphate (GlcN-1-P) to produce N-acetylglucosamine-1-phosphate (GlcNAc-1-P), which is converted into UDP-GlcNAc by the transfer of uridine 5-monophosphate (from uridine 5-triphosphate), a reaction catalyzed by the N-terminal domain. This is Bifunctional protein GlmU from Vesicomyosocius okutanii subsp. Calyptogena okutanii (strain HA).